Reading from the N-terminus, the 198-residue chain is Endonuclease V (198 aa).

Mg(2+) contacts are provided by aspartate 38 and aspartate 101.

Belongs to the endonuclease V family. The cofactor is Mg(2+).

It localises to the cytoplasm. The enzyme catalyses Endonucleolytic cleavage at apurinic or apyrimidinic sites to products with a 5'-phosphate.. In terms of biological role, DNA repair enzyme involved in the repair of deaminated bases. Selectively cleaves double-stranded DNA at the second phosphodiester bond 3' to a deoxyinosine leaving behind the intact lesion on the nicked DNA. This is Endonuclease V from Saccharolobus islandicus (strain M.16.27) (Sulfolobus islandicus).